The primary structure comprises 250 residues: 2,3-bisphosphoglycerate-dependent phosphoglycerate mutase (250 aa).

Substrate contacts are provided by residues 10-17 (RHGESQWN), 23-24 (TG), Arg62, 89-92 (ERHY), Lys100, 116-117 (RR), and 185-186 (GN). His11 acts as the Tele-phosphohistidine intermediate in catalysis. Glu89 (proton donor/acceptor) is an active-site residue.

This sequence belongs to the phosphoglycerate mutase family. BPG-dependent PGAM subfamily. In terms of assembly, homodimer.

The catalysed reaction is (2R)-2-phosphoglycerate = (2R)-3-phosphoglycerate. It participates in carbohydrate degradation; glycolysis; pyruvate from D-glyceraldehyde 3-phosphate: step 3/5. Catalyzes the interconversion of 2-phosphoglycerate and 3-phosphoglycerate. The chain is 2,3-bisphosphoglycerate-dependent phosphoglycerate mutase from Shigella dysenteriae serotype 1 (strain Sd197).